Here is a 459-residue protein sequence, read N- to C-terminus: Ribulose bisphosphate carboxylase (459 aa).

Asn111 provides a ligand contact to substrate. Residue Lys166 is the Proton acceptor of the active site. Lys168 is a substrate binding site. Mg(2+)-binding residues include Lys191, Asp193, and Glu194. Residue Lys191 is modified to N6-carboxylysine. His287 acts as the Proton acceptor in catalysis. Substrate-binding residues include Arg288, His321, and Ser368.

The protein belongs to the RuBisCO large chain family. Type II subfamily. In terms of assembly, homodimer. Requires Mg(2+) as cofactor.

The enzyme catalyses 2 (2R)-3-phosphoglycerate + 2 H(+) = D-ribulose 1,5-bisphosphate + CO2 + H2O. The catalysed reaction is D-ribulose 1,5-bisphosphate + O2 = 2-phosphoglycolate + (2R)-3-phosphoglycerate + 2 H(+). Functionally, ruBisCO catalyzes two reactions: the carboxylation of D-ribulose 1,5-bisphosphate, the primary event in carbon dioxide fixation, as well as the oxidative fragmentation of the pentose substrate. Both reactions occur simultaneously and in competition at the same active site. This chain is Ribulose bisphosphate carboxylase, found in Polaromonas naphthalenivorans (strain CJ2).